The chain runs to 419 residues: UDP-N-acetylglucosamine 1-carboxyvinyltransferase (419 aa).

22–23 (KN) provides a ligand contact to phosphoenolpyruvate. R95 lines the UDP-N-acetyl-alpha-D-glucosamine pocket. C119 acts as the Proton donor in catalysis. A 2-(S-cysteinyl)pyruvic acid O-phosphothioketal modification is found at C119. UDP-N-acetyl-alpha-D-glucosamine is bound by residues 164–167 (KVSV), D308, and I330.

The protein belongs to the EPSP synthase family. MurA subfamily.

The protein localises to the cytoplasm. The enzyme catalyses phosphoenolpyruvate + UDP-N-acetyl-alpha-D-glucosamine = UDP-N-acetyl-3-O-(1-carboxyvinyl)-alpha-D-glucosamine + phosphate. Its pathway is cell wall biogenesis; peptidoglycan biosynthesis. In terms of biological role, cell wall formation. Adds enolpyruvyl to UDP-N-acetylglucosamine. The chain is UDP-N-acetylglucosamine 1-carboxyvinyltransferase from Rickettsia canadensis (strain McKiel).